The primary structure comprises 86 residues: Cell division topological specificity factor (86 aa).

It belongs to the MinE family.

Functionally, prevents the cell division inhibition by proteins MinC and MinD at internal division sites while permitting inhibition at polar sites. This ensures cell division at the proper site by restricting the formation of a division septum at the midpoint of the long axis of the cell. This Albidiferax ferrireducens (strain ATCC BAA-621 / DSM 15236 / T118) (Rhodoferax ferrireducens) protein is Cell division topological specificity factor.